We begin with the raw amino-acid sequence, 114 residues long: T cell receptor beta variable 5-1 (114 aa).

The signal sequence occupies residues 1–21 (MGSRLLCWVLLCLLGAGPVKA). In terms of domain architecture, Ig-like spans 22–114 (GVTQTPRYLI…SALYLCASSL (93 aa)). Cys42 and Cys110 are disulfide-bonded. A glycan (N-linked (GlcNAc...) asparagine) is linked at Asn96.

Alpha-beta TR is a heterodimer composed of an alpha and beta chain; disulfide-linked. The alpha-beta TR is associated with the transmembrane signaling CD3 coreceptor proteins to form the TR-CD3 (TcR or TCR). The assembly of alpha-beta TR heterodimers with CD3 occurs in the endoplasmic reticulum where a single alpha-beta TR heterodimer associates with one CD3D-CD3E heterodimer, one CD3G-CD3E heterodimer and one CD247 homodimer forming a stable octameric structure. CD3D-CD3E and CD3G-CD3E heterodimers preferentially associate with TR alpha and TR beta chains, respectively. The association of the CD247 homodimer is the last step of TcR assembly in the endoplasmic reticulum and is required for transport to the cell surface.

Its subcellular location is the cell membrane. Its function is as follows. V region of the variable domain of T cell receptor (TR) beta chain that participates in the antigen recognition. Alpha-beta T cell receptors are antigen specific receptors which are essential to the immune response and are present on the cell surface of T lymphocytes. Recognize peptide-major histocompatibility (MH) (pMH) complexes that are displayed by antigen presenting cells (APC), a prerequisite for efficient T cell adaptive immunity against pathogens. Binding of alpha-beta TR to pMH complex initiates TR-CD3 clustering on the cell surface and intracellular activation of LCK that phosphorylates the ITAM motifs of CD3G, CD3D, CD3E and CD247 enabling the recruitment of ZAP70. In turn ZAP70 phosphorylates LAT, which recruits numerous signaling molecules to form the LAT signalosome. The LAT signalosome propagates signal branching to three major signaling pathways, the calcium, the mitogen-activated protein kinase (MAPK) kinase and the nuclear factor NF-kappa-B (NF-kB) pathways, leading to the mobilization of transcription factors that are critical for gene expression and essential for T cell growth and differentiation. The T cell repertoire is generated in the thymus, by V-(D)-J rearrangement. This repertoire is then shaped by intrathymic selection events to generate a peripheral T cell pool of self-MH restricted, non-autoaggressive T cells. Post-thymic interaction of alpha-beta TR with the pMH complexes shapes TR structural and functional avidity. This is T cell receptor beta variable 5-1 from Homo sapiens (Human).